The sequence spans 258 residues: Indole-3-glycerol phosphate synthase (258 aa).

The protein belongs to the TrpC family.

The catalysed reaction is 1-(2-carboxyphenylamino)-1-deoxy-D-ribulose 5-phosphate + H(+) = (1S,2R)-1-C-(indol-3-yl)glycerol 3-phosphate + CO2 + H2O. Its pathway is amino-acid biosynthesis; L-tryptophan biosynthesis; L-tryptophan from chorismate: step 4/5. The sequence is that of Indole-3-glycerol phosphate synthase from Chlorobium phaeobacteroides (strain DSM 266 / SMG 266 / 2430).